A 57-amino-acid chain; its full sequence is Large ribosomal subunit protein bL32c (57 aa).

The protein belongs to the bacterial ribosomal protein bL32 family.

It localises to the plastid. The protein resides in the chloroplast. The chain is Large ribosomal subunit protein bL32c from Vitis vinifera (Grape).